The chain runs to 479 residues: MAEKSYQAGVKEYRKTYWTPDYVPLDTDLLAVFKIVAQAGVPREEAAAAVAAESSTGTWTTVWTDLLTDLDYYKGRAYRIEPVPGDDNAFYAFIAYPIDLFEEGSVVNVLTSLVGNVFGFKAVRSLRLEDIRFPLAYVKTCGGPPNGIQLERDRLNKYGRPLLGCTIKPKLGLSAKNYGRAVYECLRGGLDFTKDDENINSQPFMRWQHRFEFVMEAVHKATSETGERKGHYLNVTAPTPEEMYKRAEFAKSLGAPIIMHDFLTAGFTANTGLANWCRENGMLLHIHRAMHAVLDRNPMHGIHFRVLTKCLRLSGGDHLHSGTVVGKLEGDREATIGWVDLMREPFVPENRARGIFFDQDWGAMPGVMPVASGGIHVWHMPALTAIFGDDACFQFGGGTLGHPWGNAAGAHANRVALEACVEARNQGRPVEREGREILTEAAQHSPELKIAMETWKEIKFEFDVVDKLDTGPMLRVVNA.

Substrate is bound by residues asparagine 116 and threonine 166. Lysine 168 (proton acceptor) is an active-site residue. Substrate is bound at residue lysine 170. Positions 194, 196, and 197 each coordinate Mg(2+). Lysine 194 is modified (N6-carboxylysine). Histidine 287 acts as the Proton acceptor in catalysis. Arginine 288, histidine 320, and serine 372 together coordinate substrate.

Belongs to the RuBisCO large chain family. Type I subfamily. In terms of assembly, heterohexadecamer of 8 large chains and 8 small chains. The cofactor is Mg(2+).

The enzyme catalyses 2 (2R)-3-phosphoglycerate + 2 H(+) = D-ribulose 1,5-bisphosphate + CO2 + H2O. It carries out the reaction D-ribulose 1,5-bisphosphate + O2 = 2-phosphoglycolate + (2R)-3-phosphoglycerate + 2 H(+). Functionally, ruBisCO catalyzes two reactions: the carboxylation of D-ribulose 1,5-bisphosphate, the primary event in carbon dioxide fixation, as well as the oxidative fragmentation of the pentose substrate. Both reactions occur simultaneously and in competition at the same active site. The sequence is that of Ribulose bisphosphate carboxylase large chain 2 from Bradyrhizobium sp. (strain BTAi1 / ATCC BAA-1182).